The following is a 229-amino-acid chain: 3-dehydroquinate dehydratase (229 aa).

3-dehydroquinate contacts are provided by residues 33–35 and Arg65; that span reads EWR. His121 acts as the Proton donor/acceptor in catalysis. The active-site Schiff-base intermediate with substrate is the Lys146. 3-dehydroquinate-binding residues include Arg188, Ser207, and Gln211.

The protein belongs to the type-I 3-dehydroquinase family. In terms of assembly, homodimer.

The enzyme catalyses 3-dehydroquinate = 3-dehydroshikimate + H2O. The protein operates within metabolic intermediate biosynthesis; chorismate biosynthesis; chorismate from D-erythrose 4-phosphate and phosphoenolpyruvate: step 3/7. Its function is as follows. Involved in the third step of the chorismate pathway, which leads to the biosynthesis of aromatic amino acids. Catalyzes the cis-dehydration of 3-dehydroquinate (DHQ) and introduces the first double bond of the aromatic ring to yield 3-dehydroshikimate. In Lactococcus lactis subsp. cremoris (strain MG1363), this protein is 3-dehydroquinate dehydratase.